A 161-amino-acid chain; its full sequence is Phosphopantetheine adenylyltransferase (161 aa).

Thr-10 is a substrate binding site. ATP contacts are provided by residues 10–11 (TF) and His-18. Residues Lys-42, Met-74, and Arg-88 each contribute to the substrate site. Residues 89-91 (GVR), Glu-99, and 124-130 (LSFVSSS) contribute to the ATP site.

It belongs to the bacterial CoaD family. In terms of assembly, homohexamer. Mg(2+) is required as a cofactor.

The protein localises to the cytoplasm. It carries out the reaction (R)-4'-phosphopantetheine + ATP + H(+) = 3'-dephospho-CoA + diphosphate. The protein operates within cofactor biosynthesis; coenzyme A biosynthesis; CoA from (R)-pantothenate: step 4/5. In terms of biological role, reversibly transfers an adenylyl group from ATP to 4'-phosphopantetheine, yielding dephospho-CoA (dPCoA) and pyrophosphate. The sequence is that of Phosphopantetheine adenylyltransferase from Proteus mirabilis (strain HI4320).